The chain runs to 2582 residues: Chromodomain-helicase-DNA-binding protein 8 (2582 aa).

Disordered regions lie at residues 22-111 (DDSF…PVLQ), 136-155 (MGVS…PSQS), 253-283 (VKGS…TQGE), and 349-377 (QKIQ…PLTL). Composition is skewed to polar residues over residues 42–51 (SLDSLDQMNQ), 94–111 (DYTT…PVLQ), and 141–155 (TGVS…PSQS). A compositionally biased stretch (low complexity) spans 255–267 (GSAPAGNPGAAGP). Pro residues predominate over residues 355–372 (PQPPSSQPQPQPQPPPSA). Ser434 is subject to Phosphoserine. 2 disordered regions span residues 475–585 (RARG…VKRK) and 598–617 (DEEE…PILP). Positions 495-518 (RPEEEGEKKRRKKSSGERLKEEKP) are enriched in basic and acidic residues. Phosphoserine occurs at positions 555 and 564. Basic residues predominate over residues 574–585 (QKRRSNRQVKRK). Residue Lys611 forms a Glycyl lysine isopeptide (Lys-Gly) (interchain with G-Cter in SUMO) linkage. Chromo domains lie at 644-711 (AIVD…AQMR) and 726-792 (VEVD…RVNR). A Helicase ATP-binding domain is found at 825–999 (LFNWYNRQNC…FSLLHFLEPS (175 aa)). Position 838-845 (838-845 (DEMGLGKT)) interacts with ATP. The DEAH box signature appears at 950 to 953 (DEAH). A Helicase C-terminal domain is found at 1139–1290 (LIDKLLPKLK…KAVLQSMSGR (152 aa)). Residues Ser1422 and Ser1426 each carry the phosphoserine modification. The interval 1694–1715 (EDPEYKPLQGPPKDPDDEGDPL) is disordered. The tract at residues 1791-2304 (IARREKQQRW…LVELEVECME (514 aa)) is interaction with FAM124B. A phosphoserine mark is found at Ser1978 and Ser1980. Positions 1990–2019 (QCTSRTASPSPLRPDAPVEKSPEESTVQVP) are disordered. Position 1995 is a phosphothreonine (Thr1995). Phosphoserine occurs at positions 1997, 1999, and 2010. Lys2027 is covalently cross-linked (Glycyl lysine isopeptide (Lys-Gly) (interchain with G-Cter in SUMO2)). 3 positions are modified to phosphoserine: Ser2040, Ser2070, and Ser2072. The tract at residues 2045–2120 (VRVGSSDTAP…RSRPKLYDEE (76 aa)) is disordered. Residues 2065–2074 (EDEDDSDSEL) show a composition bias toward acidic residues. Over residues 2077-2096 (SKLSPSSSSSSSSSSSSSST) the composition is skewed to low complexity. A compositionally biased stretch (basic and acidic residues) spans 2104–2118 (EEKLTADRSRPKLYD). Ser2184, Ser2202, and Ser2204 each carry phosphoserine. A disordered region spans residues 2187–2233 (VTAGGILGPGNHLLDSPSLTPGEDGDSPVPTPRSGSAASMAEEEASA). A Phosphothreonine modification is found at Thr2206. At Ser2213 the chain carries Phosphoserine. Position 2217 is a phosphothreonine (Thr2217). Low complexity predominate over residues 2222–2233 (SAASMAEEEASA). Phosphoserine is present on Ser2225. Residue Lys2258 forms a Glycyl lysine isopeptide (Lys-Gly) (interchain with G-Cter in SUMO2) linkage. Residues 2486–2582 (HVDSSTMLHH…NSDSSEDADD (97 aa)) are disordered. Positions 2493–2511 (LHHHHHHPHPHHHHHHHPG) are enriched in basic residues. Residues 2514-2529 (TTGYPSSPATTTSGTA) show a composition bias toward low complexity. The residue at position 2520 (Ser2520) is a Phosphoserine. Residues 2537–2551 (PEDDDEEEDEEDDDL) are compositionally biased toward acidic residues.

It belongs to the SNF2/RAD54 helicase family. CHD8 subfamily. Interacts with CTNNB1 and PIAS3. Component of some MLL1/MLL complex, at least composed of the core components KMT2A/MLL1, ASH2L, HCFC1/HCF1, WDR5 and RBBP5, as well as the facultative components BACC1, CHD8, E2F6, HSP70, INO80C, KANSL1, LAS1L, MAX, MCRS1, MGA, KAT8/MOF, PELP1, PHF20, PRP31, RING2, RUVB1/TIP49A, RUVB2/TIP49B, SENP3, TAF1, TAF4, TAF6, TAF7, TAF9 and TEX10. Interacts with CHD7. Interacts with FAM124B. Interacts with p53/TP53 and histone H1. Interacts with CTCF. Interacts with TLK2. Interacts with HNRNPL in an RNA-dependent manner. Post-translationally, sumoylated.

It localises to the nucleus. It catalyses the reaction ATP + H2O = ADP + phosphate + H(+). Its function is as follows. ATP-dependent chromatin-remodeling factor, it slides nucleosomes along DNA; nucleosome sliding requires ATP. Acts as a transcription repressor by remodeling chromatin structure and recruiting histone H1 to target genes. Suppresses p53/TP53-mediated apoptosis by recruiting histone H1 and preventing p53/TP53 transactivation activity. Acts as a negative regulator of Wnt signaling pathway by regulating beta-catenin (CTNNB1) activity. Negatively regulates CTNNB1-targeted gene expression by being recruited specifically to the promoter regions of several CTNNB1 responsive genes. Involved in both enhancer blocking and epigenetic remodeling at chromatin boundary via its interaction with CTCF. Acts as a suppressor of STAT3 activity by suppressing the LIF-induced STAT3 transcriptional activity. Also acts as a transcription activator via its interaction with ZNF143 by participating in efficient U6 RNA polymerase III transcription. Regulates alternative splicing of a core group of genes involved in neuronal differentiation, cell cycle and DNA repair. Enables H3K36me3-coupled transcription elongation and co-transcriptional RNA processing likely via interaction with HNRNPL. This is Chromodomain-helicase-DNA-binding protein 8 from Mus musculus (Mouse).